A 105-amino-acid polypeptide reads, in one-letter code: Pyrimidine/purine nucleoside phosphorylase (105 aa).

Belongs to the nucleoside phosphorylase PpnP family.

The catalysed reaction is a purine D-ribonucleoside + phosphate = a purine nucleobase + alpha-D-ribose 1-phosphate. It catalyses the reaction adenosine + phosphate = alpha-D-ribose 1-phosphate + adenine. It carries out the reaction cytidine + phosphate = cytosine + alpha-D-ribose 1-phosphate. The enzyme catalyses guanosine + phosphate = alpha-D-ribose 1-phosphate + guanine. The catalysed reaction is inosine + phosphate = alpha-D-ribose 1-phosphate + hypoxanthine. It catalyses the reaction thymidine + phosphate = 2-deoxy-alpha-D-ribose 1-phosphate + thymine. It carries out the reaction uridine + phosphate = alpha-D-ribose 1-phosphate + uracil. The enzyme catalyses xanthosine + phosphate = alpha-D-ribose 1-phosphate + xanthine. Catalyzes the phosphorolysis of diverse nucleosides, yielding D-ribose 1-phosphate and the respective free bases. Can use uridine, adenosine, guanosine, cytidine, thymidine, inosine and xanthosine as substrates. Also catalyzes the reverse reactions. The sequence is that of Pyrimidine/purine nucleoside phosphorylase from Anaeromyxobacter sp. (strain Fw109-5).